The following is an 812-amino-acid chain: ISWI one complex protein 2 (812 aa).

Disordered stretches follow at residues 1 to 21, 614 to 646, 679 to 704, and 762 to 812; these read MRTK…AGAA, MGNS…KRKP, AKQR…LEEL, and QTGS…PPTN. A compositionally biased stretch (polar residues) spans 627–638; sequence PQSTLEPSTKSS. The stretch at 673–714 forms a coiled coil; the sequence is ELKIIRAKQRKQQEDRERRKKMKEEKKRLEELAKKRELTESV. A compositionally biased stretch (basic and acidic residues) spans 683 to 704; it reads KQQEDRERRKKMKEEKKRLEEL. A compositionally biased stretch (low complexity) spans 769-796; the sequence is PQAPQAPQTSQASIQPQQQQQQQQQQQP.

As to quaternary structure, component of the ISW1B complex, which at least consists of ISW1, IOC2 and IOC4.

It is found in the nucleus. Functions as a component of the ISW1B complex, which acts in remodeling the chromatin by catalyzing an ATP-dependent alteration in the structure of nucleosomal DNA. The ISW1B complex acts within coding regions to control the amount of RNA polymerase II released into productive elongation and to coordinate elongation with termination and pre-mRNA processing. In Saccharomyces cerevisiae (strain ATCC 204508 / S288c) (Baker's yeast), this protein is ISWI one complex protein 2 (IOC2).